Here is a 178-residue protein sequence, read N- to C-terminus: RNA pyrophosphohydrolase (178 aa).

The Nudix hydrolase domain occupies 18–171 (PYRPCVGLMV…KRKVYEQVVA (154 aa)). Residues 59-80 (GGIDKGEDPAQAALRELYEETG) carry the Nudix box motif.

Belongs to the Nudix hydrolase family. RppH subfamily. It depends on a divalent metal cation as a cofactor.

Functionally, accelerates the degradation of transcripts by removing pyrophosphate from the 5'-end of triphosphorylated RNA, leading to a more labile monophosphorylated state that can stimulate subsequent ribonuclease cleavage. The protein is RNA pyrophosphohydrolase of Brucella abortus (strain 2308).